The primary structure comprises 256 residues: Capsid protein (256 aa).

The short motif at 3-20 (KRPADIVISTPASKVRRK) is the Bipartite nuclear localization signal element. A Nuclear localization signal motif is present at residues 40–54 (RRRTWVNRPMYRKPM). A zinc finger spans residues 68 to 85 (CEGPCKVQSYEQRHDVAH). Positions 101 to 122 (ITHRTGKRFCIKSIYVLGKIWM) match the Nuclear export signal motif. The Bipartite nuclear localization signal motif lies at 200–247 (NRFYKIYNHCTYNHQEAAKYENHTENALLLYMACTHASNPVYATLKIR).

Belongs to the geminiviridae capsid protein family. Homomultimer. Binds to single-stranded and double-stranded viral DNA. Interacts (via nuclear localization signals) with host importin alpha-1a.

It is found in the virion. Its subcellular location is the host nucleus. In terms of biological role, encapsidates the viral genome into characteristic twinned ('geminate') particles. Binds the genomic viral ssDNA and shuttles it into and out of the cell nucleus. Plays a role in protection of the genome from degradation, virus acquisition and transmission by insect vectors, infectivity, and systemic movement. The CP of monopartite geminiviruses is absolutely essential for virus movement. This is Capsid protein from Tomato leaf curl virus (strain Australia) (ToLCV).